The following is a 350-amino-acid chain: Ribosomal RNA large subunit methyltransferase M (350 aa).

Residues 217 to 220 (APGG), D236, D256, and D272 contribute to the S-adenosyl-L-methionine site. Catalysis depends on K301, which acts as the Proton acceptor.

Belongs to the class I-like SAM-binding methyltransferase superfamily. RNA methyltransferase RlmE family. RlmM subfamily. As to quaternary structure, monomer.

Its subcellular location is the cytoplasm. It catalyses the reaction cytidine(2498) in 23S rRNA + S-adenosyl-L-methionine = 2'-O-methylcytidine(2498) in 23S rRNA + S-adenosyl-L-homocysteine + H(+). In terms of biological role, catalyzes the 2'-O-methylation at nucleotide C2498 in 23S rRNA. The chain is Ribosomal RNA large subunit methyltransferase M from Cellvibrio japonicus (strain Ueda107) (Pseudomonas fluorescens subsp. cellulosa).